Here is a 397-residue protein sequence, read N- to C-terminus: Troponin T, skeletal muscle (397 aa).

Residues 1–16 (MSDDEEYTSSEEEEVV) show a composition bias toward acidic residues. Disordered stretches follow at residues 1 to 148 (MSDD…NFTI), 234 to 261 (ERQK…YPPK), and 294 to 397 (DSNE…EEEE). Basic and acidic residues-rich tracts occupy residues 37–77 (EFIK…LKEK), 84–129 (TRAE…EKKR), and 136–148 (MKDK…NFTI). Basic and acidic residues-rich tracts occupy residues 294–307 (DSNE…KEQY) and 319–329 (FGERPGKKAGE). Over residues 331 to 397 (ETPEGEEDAK…EEEEEEEEEE (67 aa)) the composition is skewed to acidic residues.

It belongs to the troponin T family. Post-translationally, some glutamate residues are polyglycylated by TTLL3B. This modification occurs exclusively on glutamate residues and results in polyglycine chains on the gamma-carboxyl group. In terms of tissue distribution, isoform 3 is expressed in the hypoderm. Isoform 8 is expressed in the dorsal vessel. Isoform 6 is expressed in adult TDT muscle and isoform 9 in adult IFM, flight and jump muscles.

Its function is as follows. Troponin T is the tropomyosin-binding subunit of troponin, the thin filament regulatory complex which confers calcium-sensitivity to striated muscle actomyosin ATPase activity. In Drosophila melanogaster (Fruit fly), this protein is Troponin T, skeletal muscle (up).